Reading from the N-terminus, the 145-residue chain is Neutral phospholipase A2 paradoxin-like beta chain (145 aa).

An N-terminal signal peptide occupies residues 1 to 27 (MHPAHLLVLLAVCVSLLGASDIPPLPL). Intrachain disulfides connect C38-C98, C54-C144, C56-C72, C71-C125, C78-C118, C87-C111, and C105-C116.

The protein belongs to the phospholipase A2 family. Group I subfamily. N49 sub-subfamily. In terms of assembly, heterotrimer of alpha, beta, and gamma chains; non-covalently linked. As to expression, expressed by the venom gland.

The protein resides in the secreted. Heterotrimer: Snake venom phospholipase A2 (PLA2) heterotrimer that acts as a potent presynaptic neurotoxin by blocking synaptic transmission and synaptic vesicle recycling. May act by binding in a calcium-dependent fashion to neurotonal pentraxin-1 (NPTX1) and neurotonal pentraxin-2 (NPTX2), but not to neuronal pentraxin receptor (NPTXR). Also binds to taipoxin-associated calcium binding protein 49 (RCN2), a protein localized in the lumen of endoplasmic reticulum. Its function is as follows. Monomer (beta chain): Snake venom phospholipase A2 homolog that is neither toxic nor enzymatically active. Does not bind calcium. This chain is Neutral phospholipase A2 paradoxin-like beta chain, found in Oxyuranus microlepidotus (Inland taipan).